Here is a 184-residue protein sequence, read N- to C-terminus: Photosystem I assembly protein Ycf4 (184 aa).

2 helical membrane passes run 22–42 (FCWAFILFLGSLGFLLVGTSS) and 57–77 (IIFFPQGIVMSFYGIAGLFIS).

Belongs to the Ycf4 family.

It localises to the plastid. The protein resides in the chloroplast thylakoid membrane. Functionally, seems to be required for the assembly of the photosystem I complex. In Draba nemorosa (Woodland whitlowgrass), this protein is Photosystem I assembly protein Ycf4.